A 233-amino-acid polypeptide reads, in one-letter code: uncharacterized protein (233 aa).

Residues 21–41 (LNILIAIVSILIVVVAANLFI) form a helical membrane-spanning segment. A disordered region spans residues 44 to 163 (PSSKDVSKDS…GEHAATYDSS (120 aa)). Composition is skewed to basic and acidic residues over residues 48–57 (DVSKDSETAQ), 66–108 (KTEK…KKDD), and 135–144 (DVEKTYENPD).

It localises to the cell membrane. This is an uncharacterized protein from Bacillus subtilis (strain 168).